Reading from the N-terminus, the 425-residue chain is MFPPARGKELLSFEDVAMYFTREEWGHLNWGQKDLYRDVMLENYRNMVLLGFQFPKPEMICQLENWDEQWILDLPRTGNRKASGSACPGSEARHKMKKLTPKQKFSEDLESYKISVVMQESAEKLSEKLHKCKEFVDSCRLTFPTSGDEYSRGFLQNLNLIQDQNAQTRWKQGRYDEDGKPFNQRSLLLGHERILTRAKSYECSECGKVIRRKAWFDQHQRIHFLENPFECKVCGQAFRQRSALTVHKQCHLQNKPYRCHDCGKCFRQLAYLVEHKRIHTKEKPYKCSKCEKTFSQNSTLIRHQVIHSGEKRHKCLECGKAFGRHSTLLCHQQIHSKPNTHKCSECGQSFGRNVDLIQHQRIHTKEEFFQCGECGKTFSFKRNLFRHQVIHTGSQPYQCVICGKSFKWHTSFIKHQGTHKGQIST.

Residues 11-82 (LSFEDVAMYF…DLPRTGNRKA (72 aa)) form the KRAB domain. C2H2-type zinc fingers lie at residues 201–223 (YECS…QRIH), 229–251 (FECK…KQCH), 257–279 (YRCH…KRIH), 285–307 (YKCS…QVIH), 313–335 (HKCL…QQIH), 341–363 (HKCS…QRIH), 369–391 (FQCG…QVIH), and 397–419 (YQCV…QGTH).

It belongs to the krueppel C2H2-type zinc-finger protein family.

The protein resides in the nucleus. In terms of biological role, may be involved in transcriptional regulation. This chain is Zinc finger protein 789 (ZNF789), found in Homo sapiens (Human).